Here is a 368-residue protein sequence, read N- to C-terminus: S-adenosylmethionine:tRNA ribosyltransferase-isomerase (368 aa).

This sequence belongs to the QueA family. As to quaternary structure, monomer.

It is found in the cytoplasm. The catalysed reaction is 7-aminomethyl-7-carbaguanosine(34) in tRNA + S-adenosyl-L-methionine = epoxyqueuosine(34) in tRNA + adenine + L-methionine + 2 H(+). The protein operates within tRNA modification; tRNA-queuosine biosynthesis. Functionally, transfers and isomerizes the ribose moiety from AdoMet to the 7-aminomethyl group of 7-deazaguanine (preQ1-tRNA) to give epoxyqueuosine (oQ-tRNA). This chain is S-adenosylmethionine:tRNA ribosyltransferase-isomerase, found in Methylorubrum extorquens (strain CM4 / NCIMB 13688) (Methylobacterium extorquens).